The primary structure comprises 338 residues: Thiamine thiazole synthase (338 aa).

The tract at residues 1–43 (MSPVATESMYKPTTINQTAHQQAMDPLKSKQQSNATVNKPAFK) is disordered. The span at 11–21 (KPTTINQTAHQ) shows a compositional bias: polar residues. Substrate contacts are provided by residues Ala91, 112–113 (ES), Gly120, and Cys185. Cys221 is modified (2,3-didehydroalanine (Cys)). Residues Asp223, His238, Met290, and 300–302 (RMG) each bind substrate.

Belongs to the THI4 family. Homooctamer. Fe cation is required as a cofactor. Post-translationally, during the catalytic reaction, a sulfide is transferred from Cys-221 to a reaction intermediate, generating a dehydroalanine residue. Highly expressed in haustoria, and only in low amounts in intercellular hyphae. Found in the basal hyphae of the uredia, but not in the pedicels and only at very low levels in uredospores.

The protein resides in the cytoplasm. The protein localises to the nucleus. The catalysed reaction is [ADP-thiazole synthase]-L-cysteine + glycine + NAD(+) = [ADP-thiazole synthase]-dehydroalanine + ADP-5-ethyl-4-methylthiazole-2-carboxylate + nicotinamide + 3 H2O + 2 H(+). Functionally, involved in biosynthesis of the thiamine precursor thiazole. Catalyzes the conversion of NAD and glycine to adenosine diphosphate 5-(2-hydroxyethyl)-4-methylthiazole-2-carboxylic acid (ADT), an adenylated thiazole intermediate. The reaction includes an iron-dependent sulfide transfer from a conserved cysteine residue of the protein to a thiazole intermediate. The enzyme can only undergo a single turnover, which suggests it is a suicide enzyme. May have additional roles in adaptation to various stress conditions and in DNA damage tolerance. This chain is Thiamine thiazole synthase (THI2), found in Uromyces fabae (Rust fungus).